The following is a 591-amino-acid chain: MFGIQESIQRSGSSMKEEPLGSGMNAVRTWMQGAGVLDANTAAQSGVGLARAHFEKQPPSNLRKSNFFHFVLALYDRQGQPVEIERTAFVGFVEKEKEANSEKTNNGIHYRLQLLYSNGIRTEQDFYVRLIDSMTKQAIVYEGQDKNPEMCRVLLTHEIMCSRCCDKKSCGNRNETPSDPVIIDRFFLKFFLKCNQNCLKNAGNPRDMRRFQVVVSTTVNVDGHVLAVSDNMFVHNNSKHGRRARRLDPSEGTPSYLEHATPCIKAISPSEGWTTGGATVIIIGDNFFDGLQVIFGTMLVWSELITPHAIRVQTPPRHIPGVVEVTLSYKSKQFCKGTPGRFIYTALNEPTIDYGFQRLQKVIPRHPGDPERLPKEVILKRAADLVEALYGMPHNNQEIILKRAADIAEALYSVPRNHNQLPALANTSVHAGMMGVNSFSGQLAVNVSEASQATNQGFTRNSSSVSPHGYVPSTTPQQTNYNSVTTSMNGYGSAAMSNLGGSPTFLNGSAANSPYAIVPSSPTMASSTSLPSNCSSSSGIFSFSPANMVSAVKQKSAFAPVVRPQTSPPPTCTSTNGNSLQAISGMIVPPM.

The residue at position 1 (Met1) is an N-acetylmethionine. The segment covering 1-14 has biased composition (polar residues); the sequence is MFGIQESIQRSGSS. Positions 1-21 are disordered; sequence MFGIQESIQRSGSSMKEEPLG. Lys16 participates in a covalent cross-link: Glycyl lysine isopeptide (Lys-Gly) (interchain with G-Cter in SUMO1); alternate. A Glycyl lysine isopeptide (Lys-Gly) (interchain with G-Cter in SUMO2); alternate cross-link involves residue Lys16. Residues 63-66 form an interaction with DNA region; sequence RKSN. The segment at 151–170 adopts a C5-type zinc-finger fold; the sequence is CRVLLTHEIMCSRCCDKKSC. 2 interaction with DNA regions span residues 197–204 and 236–239; these read NCLKNAGN and NNSK. Residues 262 to 345 enclose the IPT/TIG domain; the sequence is PCIKAISPSE…KGTPGRFIYT (84 aa). The disordered stretch occupies residues 457-480; that stretch reads GFTRNSSSVSPHGYVPSTTPQQTN.

Belongs to the COE family. As to quaternary structure, homodimer. Interacts with ZNF423 and ZNF521, leading to prevent EBF1 to bind DNA and activate target genes. Interacts with CCR4-NOT component CNOT3. In terms of assembly, (Microbial infection) Interacts with Epstein-barr virus protein EBNA2.

It is found in the nucleus. Functionally, key pioneer transcription factor of B-cell specification and commitment. Recognizes variations of the palindromic sequence 5'-ATTCCCNNGGGAATT-3'. Operates in a transcription factor network to activate B-cell-specific genes and repress genes associated with alternative cell fates. For instance, positively regulates many B-cell specific genes including BCR or CD40 while repressing genes that direct cells into alternative lineages, including GATA3 and TCF7 for the T-cell lineage. In addition to its role during lymphopoiesis, controls the thermogenic gene program in adipocytes during development and in response to environmental cold. (Microbial infection) Acts as a chromatin anchor for Epstein-Barr virus EBNA2 to mediate the assembly of EBNA2 chromatin complexes in B-cells. In addition, binds to the viral LMP1 proximal promoter and promotes its expression during latency. The sequence is that of Transcription factor COE1 (EBF1) from Homo sapiens (Human).